Reading from the N-terminus, the 350-residue chain is Beta-ketodecanoyl-[acyl-carrier-protein] synthase (350 aa).

Cys-133 is an active-site residue.

This sequence belongs to the thiolase-like superfamily. Beta-ketoacyl-ACP synthases family.

It catalyses the reaction octanoyl-CoA + malonyl-[ACP] + H(+) = 3-oxodecanoyl-[ACP] + CO2 + CoA. The protein operates within lipid metabolism; fatty acid biosynthesis. Its function is as follows. Catalyzes the condensation of octanoyl-CoA, obtained from exogenously supplied fatty acids via beta-oxidation, with malonyl-[acyl-carrier protein], forming 3-oxodecanoyl-[acyl-carrier protein], an intermediate of the fatty acid elongation cycle that can then be extended to supply all of the cellular fatty acid needs. The enzyme thereby shunts fatty acid degradation intermediates from the beta-oxidation pathway into de novo fatty acid biosynthesis. In Pseudomonas aeruginosa (strain ATCC 15692 / DSM 22644 / CIP 104116 / JCM 14847 / LMG 12228 / 1C / PRS 101 / PAO1), this protein is Beta-ketodecanoyl-[acyl-carrier-protein] synthase.